Reading from the N-terminus, the 119-residue chain is Anamorsin homolog (119 aa).

A compositionally biased stretch (polar residues) spans 1–15; sequence MSSSATSTQAFSLKT. Disordered stretches follow at residues 1-21 and 33-119; these read MSSS…PIPD and LKQA…TDDV. [2Fe-2S] cluster-binding residues include Cys42, Cys49, Cys52, and Cys54. Residues 42–54 form a fe-S binding site A region; the sequence is CTTRRRACKNCVC. Cys81, Cys84, Cys92, and Cys95 together coordinate [4Fe-4S] cluster. 2 short sequence motifs (cx2C motif) span residues 81–84 and 92–95; these read CGNC and CANC. The segment at 81-95 is fe-S binding site B; that stretch reads CGNCSKGDAFRCANC.

The protein belongs to the anamorsin family. In terms of assembly, monomer. [2Fe-2S] cluster is required as a cofactor. It depends on [4Fe-4S] cluster as a cofactor.

It localises to the cytoplasm. The protein resides in the mitochondrion intermembrane space. Component of the cytosolic iron-sulfur (Fe-S) protein assembly (CIA) machinery. Required for the maturation of extramitochondrial Fe-S proteins. Part of an electron transfer chain functioning in an early step of cytosolic Fe-S biogenesis, facilitating the de novo assembly of a [4Fe-4S] cluster on the cytosolic Fe-S scaffold complex. Electrons are transferred from NADPH via a FAD- and FMN-containing diflavin oxidoreductase. Together with the diflavin oxidoreductase, also required for the assembly of the diferric tyrosyl radical cofactor of ribonucleotide reductase (RNR), probably by providing electrons for reduction during radical cofactor maturation in the catalytic small subunit. The protein is Anamorsin homolog of Leishmania infantum.